The primary structure comprises 266 residues: Integral membrane protein 2B (266 aa).

Residues 1-54 (MVKVTFNSALAQKEAKKDEPKSSEEALIAPPDAVAVDCKDPDDVVPVGQRRAWC) are Cytoplasmic-facing. Residues 55–75 (WCMCFGLAFMLAGVILGGAYL) traverse the membrane as a helical; Signal-anchor for type II membrane protein segment. Residues 76–266 (YKYFALQPDD…KFAVETLICS (191 aa)) are Lumenal-facing. Residues 102–134 (EPSADAPAARYQTIEENIKIFEEDAVEFISVPV) are necessary for interaction with APP and inhibitor effects on APP processing. In terms of domain architecture, BRICHOS spans 137–231 (FADSDPANIV…LCHDKETYKL (95 aa)). Intrachain disulfides connect C164–C223 and C248–C265. Residue N170 is glycosylated (N-linked (GlcNAc...) asparagine).

The protein belongs to the ITM2 family. As to quaternary structure, homodimer; disulfide-linked. Interacts with SPPL2A and SPPL2B. Interacts with APP. Mature BRI2 (mBRI2) interacts with the APP amyloid-beta A4 protein; the interaction occurs at the cell surface and in the endocytic compartments and enable alpha- and beta-secretase-induced APP cleavage inhibition. Mature BRI2 (mBRI2) interacts with the APP C99; the interaction occurs in the endocytic compartments and enable gamma-secretase-induced C99 cleavage inhibition. May form heterodimers with Bri23 peptide and APP amyloid-beta protein 40. Interacts with ADAM7 in sperm; the interaction increases following capacitation. In terms of processing, the ectodomain C-terminal part of the imBRI2 is processed by furin producing a secreted Bri23 peptide and a mature BRI2, membrane form (mBRI2). The remaining part of the ectodomain of mBRI2 containing the BRICHOS domain is cleaved by ADAM10 and is secreted (BRI2C, soluble form). The membrane-bound N-terminal fragment (BRI2C, membrane form) is further proteolytically processed by SPPL2A and SPPL2B through regulated intramembrane proteolysis producing a secreted C-peptide and a BRI2 intracellular domain (BRI2 ICD) released in the cytosol. Shedding by ADAM10 facilitates intramembrane cleavage but is not absolutely required for BRI2 ICD generation. Glycosylation at Asn-170 is important for cell surface localization, but doesn't affect furin- and ADAM10-induced proteolytic processing.

The protein localises to the golgi apparatus membrane. It localises to the cell membrane. Its subcellular location is the endosome membrane. The protein resides in the secreted. Plays a regulatory role in the processing of the amyloid-beta A4 precursor protein (APP) and acts as an inhibitor of the amyloid-beta peptide aggregation and fibrils deposition. Plays a role in the induction of neurite outgrowth. Functions as a protease inhibitor by blocking access of secretases to APP cleavage sites. Its function is as follows. Mature BRI2 (mBRI2) functions as a modulator of the amyloid-beta A4 precursor protein (APP) processing leading to a strong reduction in the secretion of secretase-processed amyloid-beta protein 40 and amyloid-beta protein 42. In terms of biological role, bri23 peptide prevents aggregation of APP amyloid-beta protein 42 into toxic oligomers. The polypeptide is Integral membrane protein 2B (Itm2b) (Rattus norvegicus (Rat)).